We begin with the raw amino-acid sequence, 127 residues long: uncharacterized protein (127 aa).

Residues 5 to 25 traverse the membrane as a helical segment; the sequence is ILGITIAFIILLLTTVAILFS.

It is found in the membrane. This is an uncharacterized protein from Mycoplasma genitalium (strain ATCC 33530 / DSM 19775 / NCTC 10195 / G37) (Mycoplasmoides genitalium).